A 269-amino-acid chain; its full sequence is 4-hydroxy-tetrahydrodipicolinate reductase (269 aa).

NAD(+) contacts are provided by residues 8-13, E34, 98-100, and 122-125; these read GAAGRM, GTT, and APNY. Catalysis depends on H155, which acts as the Proton donor/acceptor. Residue H156 coordinates (S)-2,3,4,5-tetrahydrodipicolinate. The active-site Proton donor is K159. Residue 165–166 coordinates (S)-2,3,4,5-tetrahydrodipicolinate; sequence GT.

The protein belongs to the DapB family.

The protein resides in the cytoplasm. The enzyme catalyses (S)-2,3,4,5-tetrahydrodipicolinate + NAD(+) + H2O = (2S,4S)-4-hydroxy-2,3,4,5-tetrahydrodipicolinate + NADH + H(+). It catalyses the reaction (S)-2,3,4,5-tetrahydrodipicolinate + NADP(+) + H2O = (2S,4S)-4-hydroxy-2,3,4,5-tetrahydrodipicolinate + NADPH + H(+). The protein operates within amino-acid biosynthesis; L-lysine biosynthesis via DAP pathway; (S)-tetrahydrodipicolinate from L-aspartate: step 4/4. In terms of biological role, catalyzes the conversion of 4-hydroxy-tetrahydrodipicolinate (HTPA) to tetrahydrodipicolinate. This Aliivibrio salmonicida (strain LFI1238) (Vibrio salmonicida (strain LFI1238)) protein is 4-hydroxy-tetrahydrodipicolinate reductase.